A 341-amino-acid polypeptide reads, in one-letter code: Myb-related transcription factor, partner of profilin (341 aa).

In terms of domain architecture, Myb-like spans Val-8 to Lys-80. Disordered stretches follow at residues Lys-84–Met-103, Leu-180–Val-210, and Ala-309–Leu-341. A compositionally biased stretch (pro residues) spans Thr-184–Ser-200. Positions Asn-321 to Leu-341 are enriched in basic residues.

The protein resides in the nucleus. Its function is as follows. Transcriptional repressor; DNA-binding protein that specifically recognizes the core sequence 5'-YAAC[GT]G-3'. The sequence is that of Myb-related transcription factor, partner of profilin (mypop) from Xenopus laevis (African clawed frog).